The primary structure comprises 409 residues: MKLINICIFIFAIICIESTFGFYTDNSNVINLTKKNFQQQVLNSQQNWMVEFYAPWCGHCKSLKPEYEKVSNNLKGLVKIGAINCDEEKELCGQYQIQGFPTLKFFSTNPKTGKKGQPEDYQGARSASEIAKFSLAKLPSNHIQKVSQDNINKFLTGTSDAKALLFTDKPKTTDLYKALSVDFFKTLTLGEARNLNKETLEKFNIDKFPTLLVFTNDDGETFTKFDGKLTHSTIYKFLEPFSKKSNNDNNNNNNNNNNEESTKTTTTEKDPASEKFIEIKDEKSFEKSCSTGLCIVALFDQSSIDDKELNEKYLELLNTVSQNFIGRMKFVWVDVSVHDKIVPQFDLSGTPNIFVINNSKKRYTPFMGSFSDESLNSFFKSVLSGLKKAIPFTDSPKFNSQQKKQKDEL.

A signal peptide spans 1 to 21 (MKLINICIFIFAIICIESTFG). A Thioredoxin domain is found at 28-140 (NVINLTKKNF…AKFSLAKLPS (113 aa)). A disulfide bond links Cys-57 and Cys-60. The tract at residues 245–273 (SNNDNNNNNNNNNNEESTKTTTTEKDPAS) is disordered. Residues 247–259 (NDNNNNNNNNNNE) show a composition bias toward low complexity. Over residues 260–273 (ESTKTTTTEKDPAS) the composition is skewed to basic and acidic residues. The short motif at 406–409 (KDEL) is the Prevents secretion from ER element.

This sequence belongs to the protein disulfide isomerase family.

It localises to the endoplasmic reticulum lumen. It catalyses the reaction Catalyzes the rearrangement of -S-S- bonds in proteins.. This is Putative protein disulfide-isomerase DDB_G0275025 from Dictyostelium discoideum (Social amoeba).